Consider the following 444-residue polypeptide: Phosphoglucosamine mutase (444 aa).

The active-site Phosphoserine intermediate is the Ser-104. Mg(2+) is bound by residues Ser-104, Asp-243, Asp-245, and Asp-247. Residue Ser-104 is modified to Phosphoserine.

The protein belongs to the phosphohexose mutase family. The cofactor is Mg(2+). In terms of processing, activated by phosphorylation.

It carries out the reaction alpha-D-glucosamine 1-phosphate = D-glucosamine 6-phosphate. Functionally, catalyzes the conversion of glucosamine-6-phosphate to glucosamine-1-phosphate. The chain is Phosphoglucosamine mutase from Neisseria meningitidis serogroup C (strain 053442).